Reading from the N-terminus, the 345-residue chain is Phosphoribosylformylglycinamidine cyclo-ligase (345 aa).

Belongs to the AIR synthase family.

The protein resides in the cytoplasm. It carries out the reaction 2-formamido-N(1)-(5-O-phospho-beta-D-ribosyl)acetamidine + ATP = 5-amino-1-(5-phospho-beta-D-ribosyl)imidazole + ADP + phosphate + H(+). It functions in the pathway purine metabolism; IMP biosynthesis via de novo pathway; 5-amino-1-(5-phospho-D-ribosyl)imidazole from N(2)-formyl-N(1)-(5-phospho-D-ribosyl)glycinamide: step 2/2. The protein is Phosphoribosylformylglycinamidine cyclo-ligase of Aeromonas hydrophila subsp. hydrophila (strain ATCC 7966 / DSM 30187 / BCRC 13018 / CCUG 14551 / JCM 1027 / KCTC 2358 / NCIMB 9240 / NCTC 8049).